Reading from the N-terminus, the 434-residue chain is Probable proline transporter 2 (434 aa).

The next 11 helical transmembrane spans lie at 26–46 (PWYQ…VLGY), 49–69 (SVMV…AAAI), 106–126 (LTWA…IILA), 149–169 (IALS…LSAL), 171–191 (IWLG…FVLS), 213–233 (IFTT…GMLP), 251–271 (LWFQ…MGYW), 297–317 (LSAF…MYEF), 339–359 (VGVR…LPFL), 362–382 (FMSL…ANHM), and 403–423 (VAGF…LIMV).

This sequence belongs to the amino acid/polyamine transporter 2 family. Amino acid/auxin permease (AAAP) (TC 2.A.18.3) subfamily.

The protein resides in the cell membrane. In terms of biological role, proline transporter that mediates proline transport across the plasma membrane. The protein is Probable proline transporter 2 of Oryza sativa subsp. japonica (Rice).